The sequence spans 4963 residues: Kettin homolog (4963 aa).

Ig-like domains lie at 18–105 (PTFI…TCIL), 133–220 (PSAP…EAIS), and 303–392 (PIIR…ARIE). Disordered regions lie at residues 396-420 (LSVP…QQQQ), 466-501 (RRQL…EEER), 557-578 (IRPH…RQEV), 598-622 (QLYQ…QQRF), and 652-696 (TNGG…GHEH). Composition is skewed to basic and acidic residues over residues 399–417 (PDER…RDRQ), 466–475 (RRQLEHEKRL), and 484–501 (FERE…EEER). The stretch at 401 to 517 (ERRKENQLRE…KHLRQQQQTQ (117 aa)) forms a coiled coil. A compositionally biased stretch (low complexity) spans 557-576 (IRPHQQQQQHYQQQQQSPRQ). Residues 658–685 (AANGSAKTANGSANGSANGSAVHAANGG) show a composition bias toward low complexity. 20 Ig-like domains span residues 706 to 796 (PQFL…FSLN), 806 to 893 (PEFT…GRVV), 937 to 1027 (PKFE…ANIA), 1065 to 1155 (PNFH…ATII), 1199 to 1281 (FHCE…AELT), 1462 to 1554 (PKFL…ITVT), 1594 to 1687 (PPTF…ATIR), 1728 to 1819 (PAFV…VDIN), 1992 to 2085 (PPVF…IFLE), 2126 to 2217 (PTFT…CTVK), 2258 to 2350 (PKFV…ANFT), 2391 to 2481 (PQFI…AQLT), 2522 to 2613 (PKFV…GQLS), 2654 to 2745 (PSFV…ANVG), 2787 to 2878 (PQWV…ATVT), 2919 to 3010 (PNFL…ASIR), 3051 to 3141 (PAIT…ATLK), 3182 to 3273 (PRFI…ATIE), 3314 to 3407 (PAIV…FEVS), and 3448 to 3539 (PVFI…TKLT). Cys-827 and Cys-877 are oxidised to a cystine. Cys-1201 and Cys-1265 are oxidised to a cystine. Cys-1618 and Cys-1671 are oxidised to a cystine. Disulfide bonds link Cys-2016-Cys-2069 and Cys-2148-Cys-2201. Basic and acidic residues predominate over residues 3567-3583 (EAPRPAREDAPDADHGP). Residues 3567-3590 (EAPRPAREDAPDADHGPPKFTSAL) form a disordered region. 5 Ig-like domains span residues 3584 to 3677 (PKFT…LKVV), 3720 to 3811 (PSFS…GKIA), 3821 to 3913 (PQVV…TKIT), 3962 to 4052 (PEFR…AKLA), and 4098 to 4185 (PQFT…ATLD). Cystine bridges form between Cys-3606–Cys-3659 and Cys-3742–Cys-3795. Positions 4193 to 4963 (RQTKLRPANF…TSQAKLTLSR (771 aa)) are required for F-actin binding. Residues 4319–4329 (DQQEVGWERPD) are compositionally biased toward basic and acidic residues. Residues 4319–4357 (DQQEVGWERPDWAGQDGTSKLPGADEGRFKKLPTPAPEL) are disordered. Ig-like domains follow at residues 4546 to 4634 (PTIS…ANLT), 4645 to 4733 (PDFS…ARLN), 4752 to 4842 (PRFT…LVLT), and 4872 to 4960 (PHFI…AKLT).

In terms of assembly, interacts (via Ig-like domains) with F-actin. As to expression, expressed in the pharyngeal, body wall, and anal depressor muscles. Expression in these muscles is higher in hermaphrodites than in males. Expressed in the vulva and the myoepithelial sheath of the proximal ovary. Expressed in the proximal gonad of males. Not expressed in the dense bodies of the obliquely striated body wall muscle.

It localises to the cytoplasm. It is found in the myofibril. The protein localises to the sarcomere. The protein resides in the cytoskeleton. Functionally, positively regulates actin filament organization and provides mechanical stability to the myofibrils during body wall muscle contraction. Required for the organization of sarcomeric actin filaments and myosin protein myo-3 in striated body wall muscle cells. Not required for assembly of dense bodies, which are a type of integrin-based adhesion structure that link the plasma membrane to thin filaments of myofibrils, in body wall muscle. Not required for the atn-1 protein to localize to the dense bodies. The sequence is that of Kettin homolog from Caenorhabditis elegans.